A 541-amino-acid polypeptide reads, in one-letter code: L-ornithine N(5)-monooxygenase (541 aa).

FAD contacts are provided by residues 50–58 (EKQPEFQWH) and glutamine 69. Position 74 (lysine 74) interacts with substrate. An NADP(+)-binding site is contributed by 223-226 (SGQS). Substrate is bound by residues 269–272 (NEIF) and asparagine 300. 300–302 (NYS) contributes to the NADP(+) binding site. Residues 430–474 (TEIPKGPDGSLFDASEEEATWRPASPITPASPSPPSTPTSSALSQ) form a disordered region. 520-522 (SLL) is an FAD binding site. Serine 523 contacts substrate.

The protein belongs to the lysine N(6)-hydroxylase/L-ornithine N(5)-oxygenase family. In terms of assembly, homotetramer. It depends on FAD as a cofactor.

The catalysed reaction is L-ornithine + NADPH + O2 = N(5)-hydroxy-L-ornithine + NADP(+) + H2O. It catalyses the reaction L-ornithine + NADH + O2 = N(5)-hydroxy-L-ornithine + NAD(+) + H2O. Its pathway is siderophore biosynthesis. L-ornithine N(5)-monooxygenase; part of the siderophore basidioferrin biosynthetic pathway. The biosynthesis of basidioferrin depends on the hydroxylation of ornithine to N(5)-hydroxyornithine, catalyzed by the monooxygenase SMO1. The second step, the acylation of N(5)-hydroxy-L-ornithine is catalyzed by a not yet identified N-acyltransferase. Finally, assembly of basidioferrin is catalyzed by the nonribosomal peptide synthase (NRPS) NPS2 via amide bond formation between three L-AHO molecules to release the linear L-AHO trimer. This is L-ornithine N(5)-monooxygenase (SMO1) from Ceriporiopsis subvermispora (strain B) (White-rot fungus).